Here is a 385-residue protein sequence, read N- to C-terminus: ATP phosphoribosyltransferase regulatory subunit (385 aa).

It belongs to the class-II aminoacyl-tRNA synthetase family. HisZ subfamily. Heteromultimer composed of HisG and HisZ subunits.

It localises to the cytoplasm. It functions in the pathway amino-acid biosynthesis; L-histidine biosynthesis; L-histidine from 5-phospho-alpha-D-ribose 1-diphosphate: step 1/9. Functionally, required for the first step of histidine biosynthesis. May allow the feedback regulation of ATP phosphoribosyltransferase activity by histidine. In Bordetella petrii (strain ATCC BAA-461 / DSM 12804 / CCUG 43448), this protein is ATP phosphoribosyltransferase regulatory subunit.